We begin with the raw amino-acid sequence, 360 residues long: Phospho-N-acetylmuramoyl-pentapeptide-transferase (360 aa).

10 helical membrane-spanning segments follow: residues 25 to 45 (RTIY…PWLI), 73 to 93 (TMGG…WADL), 94 to 114 (TNAY…IGFV), 134 to 154 (FCLQ…GLNG), 173 to 193 (PGYV…VNLT), 198 to 218 (GLAI…AYVA), 240 to 260 (VFCG…AYPA), 262 to 282 (IFMG…VAIL), 287 to 307 (LALV…ILQV), and 337 to 357 (KVIV…VSTL).

The protein belongs to the glycosyltransferase 4 family. MraY subfamily. Requires Mg(2+) as cofactor.

It localises to the cell inner membrane. It catalyses the reaction UDP-N-acetyl-alpha-D-muramoyl-L-alanyl-gamma-D-glutamyl-meso-2,6-diaminopimeloyl-D-alanyl-D-alanine + di-trans,octa-cis-undecaprenyl phosphate = di-trans,octa-cis-undecaprenyl diphospho-N-acetyl-alpha-D-muramoyl-L-alanyl-D-glutamyl-meso-2,6-diaminopimeloyl-D-alanyl-D-alanine + UMP. It participates in cell wall biogenesis; peptidoglycan biosynthesis. Catalyzes the initial step of the lipid cycle reactions in the biosynthesis of the cell wall peptidoglycan: transfers peptidoglycan precursor phospho-MurNAc-pentapeptide from UDP-MurNAc-pentapeptide onto the lipid carrier undecaprenyl phosphate, yielding undecaprenyl-pyrophosphoryl-MurNAc-pentapeptide, known as lipid I. The polypeptide is Phospho-N-acetylmuramoyl-pentapeptide-transferase (Desulfatibacillum aliphaticivorans).